Consider the following 258-residue polypeptide: Ribosomal RNA large subunit methyltransferase E (258 aa).

Gly58, Trp60, Asp78, Asp96, and Asp120 together coordinate S-adenosyl-L-methionine. Lys160 serves as the catalytic Proton acceptor.

This sequence belongs to the class I-like SAM-binding methyltransferase superfamily. RNA methyltransferase RlmE family.

It is found in the cytoplasm. The catalysed reaction is uridine(2552) in 23S rRNA + S-adenosyl-L-methionine = 2'-O-methyluridine(2552) in 23S rRNA + S-adenosyl-L-homocysteine + H(+). Functionally, specifically methylates the uridine in position 2552 of 23S rRNA at the 2'-O position of the ribose in the fully assembled 50S ribosomal subunit. This chain is Ribosomal RNA large subunit methyltransferase E, found in Methanococcus maripaludis (strain C7 / ATCC BAA-1331).